The sequence spans 443 residues: Phosphoglucosamine mutase (443 aa).

Catalysis depends on Ser-102, which acts as the Phosphoserine intermediate. Positions 102, 241, 243, and 245 each coordinate Mg(2+). Ser-102 bears the Phosphoserine mark.

The protein belongs to the phosphohexose mutase family. The cofactor is Mg(2+). In terms of processing, activated by phosphorylation.

It catalyses the reaction alpha-D-glucosamine 1-phosphate = D-glucosamine 6-phosphate. Catalyzes the conversion of glucosamine-6-phosphate to glucosamine-1-phosphate. This Polaromonas naphthalenivorans (strain CJ2) protein is Phosphoglucosamine mutase.